Here is a 402-residue protein sequence, read N- to C-terminus: Multidrug resistance protein MdtH (402 aa).

Over M1–K12 the chain is Cytoplasmic. A helical membrane pass occupies residues Y13–I33. The Periplasmic portion of the chain corresponds to S34 to E98. Residues P99 to F116 traverse the membrane as a helical segment. The Cytoplasmic segment spans residues D117–S138. Residues L139–L159 form a helical membrane-spanning segment. Residues Q160–R164 lie on the Periplasmic side of the membrane. The helical transmembrane segment at L165 to L185 threads the bilayer. Residues P186 to Y213 lie on the Cytoplasmic side of the membrane. A helical transmembrane segment spans residues V214–M234. Residues V235 to S243 lie on the Periplasmic side of the membrane. The chain crosses the membrane as a helical span at residues A244–A264. At R265 to R276 the chain is on the cytoplasmic side. Residues L277–L297 traverse the membrane as a helical segment. Topologically, residues Q298–Q299 are periplasmic. The helical transmembrane segment at L300 to T320 threads the bilayer. The Cytoplasmic portion of the chain corresponds to L321–R339. The helical transmembrane segment at L340–G360 threads the bilayer. At K361–E367 the chain is on the periplasmic side. Residues L368–F388 form a helical membrane-spanning segment. At S389 to A402 the chain is on the cytoplasmic side.

The protein belongs to the major facilitator superfamily. DHA1 family. MdtH (TC 2.A.1.2.21) subfamily.

It localises to the cell inner membrane. The protein is Multidrug resistance protein MdtH of Shigella sonnei (strain Ss046).